Consider the following 199-residue polypeptide: Ribosome maturation factor RimM (199 aa).

Residues 93–169 (DDEYYHADLI…IELPDEIDGE (77 aa)) enclose the PRC barrel domain. The disordered stretch occupies residues 164 to 199 (DEIDGEDRASADESASAEDDAAAPNSARHPRESGDP).

Belongs to the RimM family. Binds ribosomal protein uS19.

Its subcellular location is the cytoplasm. Functionally, an accessory protein needed during the final step in the assembly of 30S ribosomal subunit, possibly for assembly of the head region. Essential for efficient processing of 16S rRNA. May be needed both before and after RbfA during the maturation of 16S rRNA. It has affinity for free ribosomal 30S subunits but not for 70S ribosomes. The protein is Ribosome maturation factor RimM of Bradyrhizobium sp. (strain ORS 278).